The primary structure comprises 500 residues: MLYFILLPLLFLVISYKFLYSKTQRFNLPPGPPSRPFVGHLHLMKPPIHRLLQRYSNQYGPIFSLRFGSRRVVVITSPSLAQESFTGQNDIVLSSRPLQLTAKYVAYNHTTVGTAPYGDHWRNLRRICSQEILSSHRLINFQHIRKDEILRMLTRLSRYTQTSNESNDFTHIELEPLLSDLTFNNIVRMVTGKRYYGDDVNNKEEAELFKKLVYDIAMYSGANHSADYLPILKLFGNKFEKEVKAIGKSMDDILQRLLDECRRDKEGNTMVNHLISLQQQQPEYYTDVIIKGLMMSMMLAGTETSAVTLEWAMANLLRNPEVLEKARSEIDEKIGKDRLIDESDIAVLPYLQNVVSETFRLFPVAPFLIPRSPTDDMKIGGYDVPRDTIVMVNAWAIHRDPEIWEEPEKFNPDRYNDGCGSDYYVYKLMPFGNGRRTCPGAGLGQRIVTLALGSLIQCFEWENVKGEEMDMSESTGLGMRKMDPLRAMCRPRPIMSKLLL.

Residues 1 to 21 traverse the membrane as a helical segment; the sequence is MLYFILLPLLFLVISYKFLYS. Residue lysine 248 forms a Glycyl lysine isopeptide (Lys-Gly) (interchain with G-Cter in ubiquitin) linkage. Cysteine 438 serves as a coordination point for heme.

Belongs to the cytochrome P450 family. It depends on heme as a cofactor.

It localises to the membrane. It functions in the pathway secondary metabolite biosynthesis. In terms of biological role, involved in indole glucosinolate biosynthesis. Catalyzes hydroxylation reactions of the glucosinolate indole ring. Converts indol-3-yl-methylglucosinolate (I3M) to 4-hydroxy-indol-3-yl-methylglucosinolate (4OH-I3M) and/or 1-hydroxy-indol-3-yl-methylglucosinolate (1OH-I3M) intermediates. These hydroxy intermediates are converted to 4-methoxy-indol-3-yl-methylglucosinolate (4MO-I3M) and 1-methoxy-indol-3-yl-methylglucosinolate (1MO-I3M) by indole glucosinolate methyltransferase 1 and 2 (IGMT1 and IGMT2). This is Cytochrome P450 81F1 from Arabidopsis thaliana (Mouse-ear cress).